The chain runs to 60 residues: Conotoxin Cal6.20 (60 aa).

A signal peptide spans methionine 1 to alanine 22. Intrachain disulfides connect cysteine 32-cysteine 42, cysteine 35-cysteine 48, and cysteine 41-cysteine 55.

It belongs to the conotoxin O1 superfamily. Expressed by the venom duct.

Its subcellular location is the secreted. Its function is as follows. Probable neurotoxin. The polypeptide is Conotoxin Cal6.20 (Californiconus californicus (California cone)).